Here is a 113-residue protein sequence, read N- to C-terminus: U11-theraphotoxin-Hhn1j (113 aa).

Positions 1-21 are cleaved as a signal peptide; it reads MNTVRVTFLLVFVLAVSLGQA. The propeptide occupies 22-74; that stretch reads DKDENRMEMQEKTEQGKSYLDFAENLLLQKLEELEAKLLEEDSEESRNSRQKR. The segment covering 60-69 has biased composition (basic and acidic residues); it reads LEEDSEESRN. The interval 60–83 is disordered; sequence LEEDSEESRNSRQKRCIGEGVPCD. Intrachain disulfides connect Cys-75/Cys-90, Cys-82/Cys-95, and Cys-89/Cys-110.

Belongs to the neurotoxin 14 (magi-1) family. 01 (HNTX-16) subfamily. As to expression, expressed by the venom gland.

Its subcellular location is the secreted. Its function is as follows. Probable ion channel inhibitor. The sequence is that of U11-theraphotoxin-Hhn1j from Cyriopagopus hainanus (Chinese bird spider).